We begin with the raw amino-acid sequence, 282 residues long: 5'-adenylylsulfate reductase-like 2 (282 aa).

The signal sequence occupies residues 1 to 19; the sequence is MRWWPALPLLLLAVAVAGA. The Thioredoxin domain maps to 20 to 159; it reads GDAAPVCTRP…LAAFYNDVSG (140 aa). N-linked (GlcNAc...) asparagine glycosylation is present at N134. A helical transmembrane segment spans residues 205 to 225; the sequence is AASFVILRLLYLFYPKITAFV.

Its subcellular location is the membrane. This chain is 5'-adenylylsulfate reductase-like 2 (APRL2), found in Oryza sativa subsp. japonica (Rice).